Consider the following 141-residue polypeptide: Hemoglobin subunit alpha (141 aa).

Residues 1 to 141 (VLSAADKTAI…VATALGSHYR (141 aa)) form the Globin domain. His-59 contributes to the O2 binding site. Heme b is bound at residue His-88.

This sequence belongs to the globin family. Heterotetramer of two alpha chains and two beta chains. In terms of tissue distribution, red blood cells.

In terms of biological role, involved in oxygen transport from the lung to the various peripheral tissues. The sequence is that of Hemoglobin subunit alpha (HBA) from Squalus acanthias (Spiny dogfish).